A 176-amino-acid polypeptide reads, in one-letter code: Large ribosomal subunit protein uL16 (176 aa).

The protein belongs to the universal ribosomal protein uL16 family.

The chain is Large ribosomal subunit protein uL16 from Thermoplasma acidophilum (strain ATCC 25905 / DSM 1728 / JCM 9062 / NBRC 15155 / AMRC-C165).